Here is a 203-residue protein sequence, read N- to C-terminus: Imidazoleglycerol-phosphate dehydratase (203 aa).

This sequence belongs to the imidazoleglycerol-phosphate dehydratase family.

The protein localises to the cytoplasm. It carries out the reaction D-erythro-1-(imidazol-4-yl)glycerol 3-phosphate = 3-(imidazol-4-yl)-2-oxopropyl phosphate + H2O. It participates in amino-acid biosynthesis; L-histidine biosynthesis; L-histidine from 5-phospho-alpha-D-ribose 1-diphosphate: step 6/9. The protein is Imidazoleglycerol-phosphate dehydratase of Salinispora arenicola (strain CNS-205).